The following is a 394-amino-acid chain: Acryloyl-CoA reductase (NADH) (394 aa).

Residues 135-144 (FALTEPNAGS) and 170-172 (FIS) contribute to the FAD site. Residue S144 coordinates substrate. 254–257 (DGAR) serves as a coordination point for substrate. FAD-binding positions include R282, Q293, and 350 to 354 (QIHGG). E377 functions as the Proton acceptor in the catalytic mechanism. Residue G378 coordinates substrate. Residue 379–381 (TSE) coordinates FAD.

Heterohexadecamer; tetramer of tetramers. Each tetramer is composed of 2 alpha (AcrC), a beta (AcrA) and a gamma (AcrB) subunit. It depends on FAD as a cofactor.

The protein localises to the cytoplasm. The catalysed reaction is propanoyl-CoA + NAD(+) = acryloyl-CoA + NADH + H(+). Functionally, probable catalytic subunit of the acryloyl-CoA reductase complex involved in the pathway of L-alanine fermentation. Catalyzes the irreversible NADH-dependent formation of propionyl-CoA from acryloyl-CoA. It can also use 3-buten-2-one as substrate. This Anaerotignum propionicum (Clostridium propionicum) protein is Acryloyl-CoA reductase (NADH) (acrC).